Here is a 119-residue protein sequence, read N- to C-terminus: Large ribosomal subunit protein uL18 (119 aa).

Belongs to the universal ribosomal protein uL18 family. In terms of assembly, part of the 50S ribosomal subunit; part of the 5S rRNA/L5/L18/L25 subcomplex. Contacts the 5S and 23S rRNAs.

Functionally, this is one of the proteins that bind and probably mediate the attachment of the 5S RNA into the large ribosomal subunit, where it forms part of the central protuberance. In Cereibacter sphaeroides (strain ATCC 17029 / ATH 2.4.9) (Rhodobacter sphaeroides), this protein is Large ribosomal subunit protein uL18.